A 651-amino-acid polypeptide reads, in one-letter code: Bromodomain-containing protein 7 (651 aa).

Disordered regions lie at residues 36–133 (ELST…EVEQ) and 257–298 (KDKV…KKKD). Residues 58–69 (HKDRKRKKRKKG) are compositionally biased toward basic residues. The Nuclear localization signal motif lies at 65–96 (KRKKGEKQVPGEEKEKRKRKVKEDKRKRDREH). A compositionally biased stretch (basic and acidic residues) spans 70-105 (EKQVPGEEKEKRKRKVKEDKRKRDREHPDSEGEQEL). The Bromo domain occupies 131-235 (VEQTPLQEAL…HSGMKILSQE (105 aa)). The span at 271–298 (GSGKDKGEPVDGDTKAFKTPNKEHKKKD) shows a compositional bias: basic and acidic residues. Positions 533-564 (SEEAEIFQRKLDETTKLLRELQDAQNERLSTK) form a coiled coil.

It is found in the nucleus. The protein localises to the chromosome. Its function is as follows. Acts both as coactivator and as corepressor. May play a role in chromatin remodeling. Participates in the Wnt signaling pathway. Transcriptional corepressor that down-regulates the expression of target genes. Binds to target promoters, leading to increased histone H3 acetylation. Coactivator for TP53-mediated activation of transcription of a set of target genes. Required for TP53-mediated cell-cycle arrest in response to oncogene activation. Inhibits cell cycle progression from G1 to S phase. The sequence is that of Bromodomain-containing protein 7 (BRD7) from Gallus gallus (Chicken).